The primary structure comprises 691 residues: Elongation factor G (691 aa).

The tr-type G domain occupies 8 to 282 (ERVRNIGIAA…AVIDYLPAPI (275 aa)). Residues 17-24 (AHIDAGKT), 81-85 (DTPGH), and 135-138 (NKMD) contribute to the GTP site.

It belongs to the TRAFAC class translation factor GTPase superfamily. Classic translation factor GTPase family. EF-G/EF-2 subfamily.

The protein resides in the cytoplasm. Its function is as follows. Catalyzes the GTP-dependent ribosomal translocation step during translation elongation. During this step, the ribosome changes from the pre-translocational (PRE) to the post-translocational (POST) state as the newly formed A-site-bound peptidyl-tRNA and P-site-bound deacylated tRNA move to the P and E sites, respectively. Catalyzes the coordinated movement of the two tRNA molecules, the mRNA and conformational changes in the ribosome. This chain is Elongation factor G, found in Prochlorococcus marinus (strain SARG / CCMP1375 / SS120).